Reading from the N-terminus, the 302-residue chain is Sulfate adenylyltransferase subunit 2 (302 aa).

Belongs to the PAPS reductase family. CysD subfamily. Heterodimer composed of CysD, the smaller subunit, and CysN.

The enzyme catalyses sulfate + ATP + H(+) = adenosine 5'-phosphosulfate + diphosphate. Its pathway is sulfur metabolism; hydrogen sulfide biosynthesis; sulfite from sulfate: step 1/3. In terms of biological role, with CysN forms the ATP sulfurylase (ATPS) that catalyzes the adenylation of sulfate producing adenosine 5'-phosphosulfate (APS) and diphosphate, the first enzymatic step in sulfur assimilation pathway. APS synthesis involves the formation of a high-energy phosphoric-sulfuric acid anhydride bond driven by GTP hydrolysis by CysN coupled to ATP hydrolysis by CysD. The polypeptide is Sulfate adenylyltransferase subunit 2 (Salmonella paratyphi A (strain AKU_12601)).